Here is a 277-residue protein sequence, read N- to C-terminus: Outer kinetochore KNL1 complex subunit ZWINT (277 aa).

The interaction with NDC80 and ZW10 stretch occupies residues 80 to 155 (ASEDTSRQKA…MEKRRAVQNQ (76 aa)). A coiled-coil region spans residues 104 to 217 (REHVEAIKIG…RYQTFLQLLY (114 aa)). The interval 228–277 (AEAEAENLPDDKPQQPTRPQEQSTGDTMGRDPGVSFKAVGLQPAGDVNLP) is disordered. A compositionally biased stretch (polar residues) spans 241-253 (QQPTRPQEQSTGD).

Component of the KNL1 complex composed of KNL1 and ZWINT. Part of the ten-subunit outer kinetochore KMN network that includes the KNL1, MIS12 and NDC80 complexes; a bioriented kinetochore contains approximately 150 copies of the network. Interacts with the MIS12 complex subunits MIS12 DSN1, and PMF1. Interacts with the NDC80 complex subunit NDC80 during mitosis. Interacts with ZW10. Interacts with CETN3.

The protein resides in the nucleus. The protein localises to the chromosome. It localises to the centromere. It is found in the kinetochore. Acts as a component of the outer kinetochore KNL1 complex that serves as a docking point for spindle assembly checkpoint components and mediates microtubule-kinetochore interactions. Kinetochores, consisting of a centromere-associated inner segment and a microtubule-contacting outer segment, play a crucial role in chromosome segregation by mediating the physical connection between centromeric DNA and spindle microtubules. The outer kinetochore is made up of the ten-subunit KMN network, comprising the MIS12, NDC80 and KNL1 complexes, and auxiliary microtubule-associated components; together they connect the outer kinetochore with the inner kinetochore, bind microtubules, and mediate interactions with mitotic checkpoint proteins that delay anaphase until chromosomes are bioriented on the spindle. Targets the RZZ complex to the kinetochore at prometaphase. Recruits MAD2L1 to the kinetochore, but is not required for BUB1B localization. In addition to orienting mitotic chromosomes, it is also essential for alignment of homologous chromosomes during meiotic metaphase I. In meiosis I, required to activate the spindle assembly checkpoint at unattached kinetochores to correct erroneous kinetochore-microtubule attachments. This chain is Outer kinetochore KNL1 complex subunit ZWINT (ZWINT), found in Homo sapiens (Human).